Consider the following 77-residue polypeptide: UPF0337 protein CE0198 (77 aa).

The interval 1 to 77 (MGDLSNKAEG…PDVEHPEAVN (77 aa)) is disordered. 2 stretches are compositionally biased toward basic and acidic residues: residues 30–56 (DEGR…KDGA) and 64–77 (QDKD…EAVN).

Belongs to the UPF0337 (CsbD) family.

The polypeptide is UPF0337 protein CE0198 (Corynebacterium efficiens (strain DSM 44549 / YS-314 / AJ 12310 / JCM 11189 / NBRC 100395)).